Consider the following 1034-residue polypeptide: Receptor-type guanylate cyclase gcy-25 (1034 aa).

The N-terminal stretch at 1-16 is a signal peptide; that stretch reads MLLLLLLLKISTFVDS. Topologically, residues 17–409 are extracellular; that stretch reads FQIGHLEFEN…YDNNLCSDFH (393 aa). Residues N28, N224, N301, N308, and N373 are each glycosylated (N-linked (GlcNAc...) asparagine). The chain crosses the membrane as a helical span at residues 410-430; that stretch reads VFMIAAIVFSILLIPMAIAFY. The Cytoplasmic segment spans residues 431–1034; sequence LQRKEHLIQQ…DNSKKMFLNV (604 aa). Positions 464 to 749 constitute a Protein kinase domain; it reads RVSTISTARA…KITDAVNREF (286 aa). ATP is bound by residues 470–478 and K497; that span reads TARASYSSI. Positions 758 to 785 form a coiled coil; sequence IDQMIEMIDEYSANLEQIVAERTRELEQ. The 131-residue stretch at 821 to 951 folds into the Guanylate cyclase domain; the sequence is TLLVVDVCQF…DTVNMACRMA (131 aa).

The protein belongs to the adenylyl cyclase class-4/guanylyl cyclase family. Expressed in AQR, PQR and URX sensory neurons.

It localises to the cell membrane. The enzyme catalyses GTP = 3',5'-cyclic GMP + diphosphate. Its function is as follows. Guanylate cyclase involved in the production of the second messenger cGMP. The sequence is that of Receptor-type guanylate cyclase gcy-25 from Caenorhabditis elegans.